Reading from the N-terminus, the 201-residue chain is Holliday junction branch migration complex subunit RuvA (201 aa).

The interval 1-63 is domain I; that stretch reads MYAYIKGKLS…EDAQLLYGFM (63 aa). The interval 64-142 is domain II; that stretch reads SEEEKGMFLS…ITEENPETLL (79 aa). A flexible linker region spans residues 143-153; that stretch reads NFEGSESNQTS. Positions 153-201 are domain III; that stretch reads SPILDEALLALEALGYSKRELNKVEKKLQAESYTSVDEAVKAGLKILVS.

Belongs to the RuvA family. Homotetramer. Forms an RuvA(8)-RuvB(12)-Holliday junction (HJ) complex. HJ DNA is sandwiched between 2 RuvA tetramers; dsDNA enters through RuvA and exits via RuvB. An RuvB hexamer assembles on each DNA strand where it exits the tetramer. Each RuvB hexamer is contacted by two RuvA subunits (via domain III) on 2 adjacent RuvB subunits; this complex drives branch migration. In the full resolvosome a probable DNA-RuvA(4)-RuvB(12)-RuvC(2) complex forms which resolves the HJ.

Its subcellular location is the cytoplasm. Functionally, the RuvA-RuvB-RuvC complex processes Holliday junction (HJ) DNA during genetic recombination and DNA repair, while the RuvA-RuvB complex plays an important role in the rescue of blocked DNA replication forks via replication fork reversal (RFR). RuvA specifically binds to HJ cruciform DNA, conferring on it an open structure. The RuvB hexamer acts as an ATP-dependent pump, pulling dsDNA into and through the RuvAB complex. HJ branch migration allows RuvC to scan DNA until it finds its consensus sequence, where it cleaves and resolves the cruciform DNA. The polypeptide is Holliday junction branch migration complex subunit RuvA (Staphylococcus carnosus (strain TM300)).